We begin with the raw amino-acid sequence, 78 residues long: Large ribosomal subunit protein bL28 (78 aa).

The protein belongs to the bacterial ribosomal protein bL28 family.

In Salmonella choleraesuis (strain SC-B67), this protein is Large ribosomal subunit protein bL28.